A 449-amino-acid polypeptide reads, in one-letter code: Elongation factor 1-alpha (449 aa).

The tr-type G domain maps to 5–230; that stretch reads KVHMNLVVVG…DMLEPPVRPS (226 aa). The G1 stretch occupies residues 14–21; sequence GHVDAGKS. Residue 14 to 21 participates in GTP binding; the sequence is GHVDAGKS. The G2 stretch occupies residues 70–74; the sequence is GITID. A G3 region spans residues 91 to 94; the sequence is DAPG. GTP contacts are provided by residues 91 to 95 and 153 to 156; these read DAPGH and NKMD. The interval 153 to 156 is G4; the sequence is NKMD. The segment at 194 to 196 is G5; that stretch reads SGW. Residue glutamate 362 is modified to 5-glutamyl glycerylphosphorylethanolamine.

It belongs to the TRAFAC class translation factor GTPase superfamily. Classic translation factor GTPase family. EF-Tu/EF-1A subfamily. Phosphatidylethanolamine (PE) is a direct precursor of the ethanolamine-phosphoglycerol (EPG) moiety.

It is found in the cytoplasm. Functionally, this protein promotes the GTP-dependent binding of aminoacyl-tRNA to the A-site of ribosomes during protein biosynthesis. In Trypanosoma brucei brucei, this protein is Elongation factor 1-alpha (TEF1).